Reading from the N-terminus, the 102-residue chain is Large ribosomal subunit protein bL21 (102 aa).

The protein belongs to the bacterial ribosomal protein bL21 family. In terms of assembly, part of the 50S ribosomal subunit. Contacts protein L20.

In terms of biological role, this protein binds to 23S rRNA in the presence of protein L20. In Neisseria meningitidis serogroup A / serotype 4A (strain DSM 15465 / Z2491), this protein is Large ribosomal subunit protein bL21.